The chain runs to 158 residues: Transcription elongation factor GreA (158 aa).

This sequence belongs to the GreA/GreB family.

In terms of biological role, necessary for efficient RNA polymerase transcription elongation past template-encoded arresting sites. The arresting sites in DNA have the property of trapping a certain fraction of elongating RNA polymerases that pass through, resulting in locked ternary complexes. Cleavage of the nascent transcript by cleavage factors such as GreA or GreB allows the resumption of elongation from the new 3'terminus. GreA releases sequences of 2 to 3 nucleotides. The protein is Transcription elongation factor GreA of Polaromonas naphthalenivorans (strain CJ2).